The primary structure comprises 208 residues: Uracil phosphoribosyltransferase (208 aa).

Residues arginine 78, arginine 103, and 130-138 (DPMFATGGT) contribute to the 5-phospho-alpha-D-ribose 1-diphosphate site. Uracil-binding positions include isoleucine 193 and 198 to 200 (GDA). A 5-phospho-alpha-D-ribose 1-diphosphate-binding site is contributed by aspartate 199.

Belongs to the UPRTase family. The cofactor is Mg(2+).

The enzyme catalyses UMP + diphosphate = 5-phospho-alpha-D-ribose 1-diphosphate + uracil. It participates in pyrimidine metabolism; UMP biosynthesis via salvage pathway; UMP from uracil: step 1/1. Allosterically activated by GTP. Its function is as follows. Catalyzes the conversion of uracil and 5-phospho-alpha-D-ribose 1-diphosphate (PRPP) to UMP and diphosphate. The chain is Uracil phosphoribosyltransferase from Campylobacter curvus (strain 525.92).